Reading from the N-terminus, the 259-residue chain is Translation initiation factor IF-2, chloroplastic (259 aa).

Residues 171-259 enclose the tr-type G domain; the sequence is LRAPIVAVLG…LLIIAADEGI (89 aa). 180–187 contributes to the GTP binding site; sequence GHVNHGKT.

Belongs to the TRAFAC class translation factor GTPase superfamily. Classic translation factor GTPase family. IF-2 subfamily.

It is found in the plastid. The protein resides in the chloroplast. Its function is as follows. One of the essential components for the initiation of protein synthesis. Protects formylmethionyl-tRNA from spontaneous hydrolysis and promotes its binding to the 30S ribosomal subunits. Also involved in the hydrolysis of GTP during the formation of the 70S ribosomal complex. This is Translation initiation factor IF-2, chloroplastic (infB) from Galdieria sulphuraria (Red alga).